We begin with the raw amino-acid sequence, 1171 residues long: ATP-dependent helicase/deoxyribonuclease subunit B (1171 aa).

The region spanning 1-287 (MSLRFVIGRA…IPLMEQPRFH (287 aa)) is the UvrD-like helicase ATP-binding domain. 8-15 (GRAGSGKS) lines the ATP pocket. The UvrD-like helicase C-terminal domain maps to 281–587 (MEQPRFHSPA…QFANIPPSLD (307 aa)). [4Fe-4S] cluster-binding residues include cysteine 805, cysteine 1129, cysteine 1132, and cysteine 1138.

The protein belongs to the helicase family. AddB/RexB type 1 subfamily. As to quaternary structure, heterodimer of AddA and AddB. It depends on Mg(2+) as a cofactor. [4Fe-4S] cluster is required as a cofactor.

The heterodimer acts as both an ATP-dependent DNA helicase and an ATP-dependent, dual-direction single-stranded exonuclease. Recognizes the chi site generating a DNA molecule suitable for the initiation of homologous recombination. The AddB subunit has 5' -&gt; 3' nuclease activity but not helicase activity. In Bacillus cereus (strain G9842), this protein is ATP-dependent helicase/deoxyribonuclease subunit B.